The following is a 664-amino-acid chain: E3 ubiquitin-protein ligase CHFR (664 aa).

Residues 38–89 (WTIGRRRGCDLSFPSNKLVSGDHCKLTVDEISGEVTLEDTSTNGTVINKLQV) form the FHA domain. Disordered stretches follow at residues 170 to 220 (LEEP…GRSS) and 245 to 264 (ESKD…GDGE). Over residues 174–202 (QPSTSTSDLLPTASTSSTEPELTSAGQKH) the composition is skewed to polar residues. Residues 203-215 (SSSSGPGNTSISP) show a composition bias toward low complexity. Basic and acidic residues predominate over residues 245–263 (ESKDHEELEPAKKKMKGDG). An RING-type zinc finger spans residues 303–342 (CIICQDLLHDCVSLQPCMHTFCAACYSGWMERSSLCPTCR). Thr385 bears the Phosphothreonine mark. Residues 389–413 (LQPKVRRSFSDEEGSSEDLLELSDV) are disordered. The span at 399–413 (DEEGSSEDLLELSDV) shows a compositional bias: acidic residues. A PBZ-type zinc finger spans residues 633-655 (PDCYWGRNCRTQVKAHHAMKFNH).

Belongs to the CHFR family. As to quaternary structure, interacts with HDAC1 and HDAC2. Interacts with PML (with sumoylated form of PML). In terms of processing, poly-ADP-ribosylated. In addition to binding non covalently poly(ADP-ribose) via its PBZ-type zinc finger, the protein is also covalently poly-ADP-ribosylated by PARP1. Autoubiquitinated; may regulate its cellular level. Post-translationally, phosphorylated by PKB. Phosphorylation may affect its E3 ligase activity.

It localises to the nucleus. Its subcellular location is the PML body. It carries out the reaction S-ubiquitinyl-[E2 ubiquitin-conjugating enzyme]-L-cysteine + [acceptor protein]-L-lysine = [E2 ubiquitin-conjugating enzyme]-L-cysteine + N(6)-ubiquitinyl-[acceptor protein]-L-lysine.. It participates in protein modification; protein ubiquitination. E3 ubiquitin-protein ligase that functions in the antephase checkpoint by actively delaying passage into mitosis in response to microtubule poisons. Acts in early prophase before chromosome condensation, when the centrosome move apart from each other along the periphery of the nucleus. Probably involved in signaling the presence of mitotic stress caused by microtubule poisons by mediating the 'Lys-48'-linked ubiquitination of target proteins, leading to their degradation by the proteasome. Promotes the ubiquitination and subsequent degradation of AURKA and PLK1. Probably acts as a tumor suppressor, possibly by mediating the polyubiquitination of HDAC1, leading to its degradation. May also promote the formation of 'Lys-63'-linked polyubiquitin chains and functions with the specific ubiquitin-conjugating UBC13-MMS2 (UBE2N-UBE2V2) heterodimer. Substrates that are polyubiquitinated at 'Lys-63' are usually not targeted for degradation, but are rather involved in signaling cellular stress. This chain is E3 ubiquitin-protein ligase CHFR (Chfr), found in Mus musculus (Mouse).